The primary structure comprises 308 residues: GATA transcription factor 10 (308 aa).

A GATA-type zinc finger spans residues 214-268 (DGIVRICTHCETITTPQWRQGPSGPKTLCNACGVRFKSGRLVPEYRPASSPTFIP).

Belongs to the type IV zinc-finger family. Class A subfamily.

The protein resides in the nucleus. Its function is as follows. Transcriptional activator that specifically binds 5'-GATA-3' or 5'-GAT-3' motifs within gene promoters. May be involved in the regulation of some light-responsive genes. In Arabidopsis thaliana (Mouse-ear cress), this protein is GATA transcription factor 10 (GATA10).